The sequence spans 91 residues: Lactococcin-B immunity protein (91 aa).

In terms of biological role, imparts immunity to lactococcin-B to naturally sensitive host strains. This is Lactococcin-B immunity protein (lciB) from Lactococcus lactis subsp. cremoris (Streptococcus cremoris).